Reading from the N-terminus, the 468-residue chain is MIDNNHLRKRKNINLVIGLGKSGVWAAKYLRSIDKRVIIWESKDGKEFLEIKTELEELNILVSLNKEFVFKEIHPFIKEIESVVVSPSIPYDHETIIKLKKKGIKVIGEINVAWEILKETNWIGITGTNGKTTVTHLLSHILCENKLYAPFAGNIGTPLCKYAYSKKYEKIDWVVAELSSYQIEISPEVKPNIGIWTTFTEDHLERHKTLENYFNIKKSLLEKSDFRIYNYDDKNLRNHYSSLSKGVWITTSLDKSNFIQCDYWIDDQAFIIERGKRLFKLEHFSLKGIHNLQNLLLVIAAARKVGLSGKKIKDSLSNYKQLPHRMETIYKNNDLEIINDSKATNFDSSIAGINSIEGQIIIISGGRLKGNKYSEWVQVLKQKVKCIFLFGESSKVLKMALINEGFKKDIFEFSELKELLNFVFHYLQNNKVGTLLFSPSCSSFDQFKNYEERGDHFKKLISEKLKVN.

Position 127 to 133 (127 to 133 (GTNGKTT)) interacts with ATP.

It belongs to the MurCDEF family.

It is found in the cytoplasm. It catalyses the reaction UDP-N-acetyl-alpha-D-muramoyl-L-alanine + D-glutamate + ATP = UDP-N-acetyl-alpha-D-muramoyl-L-alanyl-D-glutamate + ADP + phosphate + H(+). It participates in cell wall biogenesis; peptidoglycan biosynthesis. In terms of biological role, cell wall formation. Catalyzes the addition of glutamate to the nucleotide precursor UDP-N-acetylmuramoyl-L-alanine (UMA). In Prochlorococcus marinus (strain MIT 9312), this protein is UDP-N-acetylmuramoylalanine--D-glutamate ligase.